Reading from the N-terminus, the 229-residue chain is Coiled-coil domain-containing protein 134 (229 aa).

Positions 1–22 are cleaved as a signal peptide; that stretch reads MDPVQLLSFLLALLLPLGTALD. Residues 192–218 are a coiled coil; it reads NTDAFQKALREEEKRRRKEEKRKEIRK. Positions 201 to 229 are disordered; that stretch reads REEEKRRRKEEKRKEIRKGPRITRSRSEL. Residues 219 to 229 show a composition bias toward basic residues; the sequence is GPRITRSRSEL. The short motif at 226–229 is the Prevents secretion from ER element; it reads RSEL.

Belongs to the CCDC134 family.

It is found in the endoplasmic reticulum lumen. Its function is as follows. Molecular adapter required to prevent protein hyperglycosylation of HSP90B1: during translation, associates with nascent HSP90B1 and the STT3A catalytic component of the OST-A complex and tethers them to a specialized translocon that forms a microenvironment for HSP90B1 folding. In the CCDC134-containing translocon, STT3A associates with the SRT pseudosubstrate motif of HSP90B1, preventing access to facultative glycosylation sites until folding is completed, preventing hyperglycosylation and subsequent degradation of HSP90B1. The chain is Coiled-coil domain-containing protein 134 (ccdc134) from Xenopus tropicalis (Western clawed frog).